The sequence spans 507 residues: Alkyl hydroperoxide reductase subunit F (507 aa).

207 to 222 lines the FAD pocket; the sequence is DVLIVGGGPASGSAAI. Cysteine 335 and cysteine 338 are disulfide-bonded. An NAD(+)-binding site is contributed by 347–361; it reads DVAVIGGGNSGVEAA. 467–477 is an FAD binding site; it reads TNVPGIFAAGD.

It belongs to the class-II pyridine nucleotide-disulfide oxidoreductase family. In terms of assembly, homodimer. FAD serves as cofactor.

Serves to protect the cell against DNA damage by alkyl hydroperoxides. It can use either NADH or NADPH as electron donor for direct reduction of redox dyes or of alkyl hydroperoxides when combined with the AhpC protein. The chain is Alkyl hydroperoxide reductase subunit F (ahpF) from Staphylococcus epidermidis (strain ATCC 35984 / DSM 28319 / BCRC 17069 / CCUG 31568 / BM 3577 / RP62A).